The primary structure comprises 1149 residues: MSNCWCFIFCKERVRSNSSSPQHDGTSREEADHQVDVSDGIRLVPDKAEATMATASDEIMHQDIVPLCAADIQEQLKKRFAYLSGGRGQDGSPVITFPDYPAFSEIPDKEFQNVMTYLTSIPSLQDAGIGFILVIDRRQDKWTSVKASVLRIAASFPANLQLVLVLRPTGFFQRTLSDIAFKFNRDEFKMKVPVMMLSSVPELHGYIDKSQLTEDLGGTLDYCHSRWLCHRTAIESFALMVKQTAQMLQAFGTELAETELPNDVQSTSLVLSAHTEKKAKVKEDLQLALTEGNSILESLREPLAESIVHSVNQDQLDNQATVKRLLTQLNETEAAFDEFWAKHQQKLEQCLQLRHFEQGFREVKTALDSMSQKIAAFTDVGNSLAHVQHLLKDLTTFEEKSSVAVDKARALSLEGQQLIENRHYAVDSIHPKCEELQHLCDHFASEVTRRRDLLSKSLELHSLLETSMKWSDEGIFLLASQPVDKCQSQDGAEAALQEIEKFLETGAENKIQELNKIYKEYECILNQDLLEHVQKVFQKQESTEEMFHRRQASLKKLAAKQTRPVQPVAPRPEALTKSPSPSPGSWRSSENSSSEGNALRRGPYRRAKSEMSEPRQGRTSSTGEEEESLAILRRHVMNELLDTERAYVEELLCVLEGYAAEMDNPLMAHLISTGLQNKKNILFGNMEEIYHFHNRIFLRELESCIDCPELVGRCFLERMEEFQIYEKYCQNKPRSESLWRQCSDCPFFQECQKKLDHKLSLDSYLLKPVQRITKYQLLLKEMLKYSKHCEGAEDLQEALSSILGILKAVNDSMHLIAITGYDGNLGDLGKLLMQGSFSVWTDHKKGHTKVKELARFKPMQRHLFLHEKAVLFCKKREENGEGYEKAPSYSYKQSLNMTAVGITENVKGDTKKFEIWYNAREEVYIIQAPTPEIKAAWVNEIRKVLTSQLQACREASQHRALEQSHSLPLPTPASTSPTKGSTRNVKKLEDRKTDPLCLEGCVSSSLPKPPEKGKGWSKTSHSLEAPEEDGGWSSAEELINSSDAEEDGGVGPRKLVPGKYTVLMDGEKGGSDTLAMRSGDMVEVVEEGTEGLWYVRDLTSSKEGWVPASSLATLLGKSSSAQCLSSSGKTHCARQLCPEPAKILSPEPV.

One can recognise a CRAL-TRIO domain in the interval Met52–His224. Residues His355 to Leu454 form a Spectrin repeat. Phosphoserine occurs at positions 457, 462, 471, and 480. The stretch at Leu503–Asp528 forms a coiled coil. A disordered region spans residues Lys555–Glu627. A compositionally biased stretch (low complexity) spans Pro583–Ser594. Positions Ala607 to Gln616 are enriched in basic and acidic residues. Position 621 is a phosphoserine (Ser621). Thr622 is modified (phosphothreonine). In terms of domain architecture, DH spans Leu632 to Ser812. The PH domain occupies Lys830–Thr946. Residues Ser956 to Ser1033 form a disordered region. The span at Ser964–Thr978 shows a compositional bias: low complexity. Residues Ser1033, Ser1034, Ser1041, and Ser1042 each carry the phosphoserine modification. An SH3 domain is found at Leu1055–Gly1116.

Belongs to the MCF2 family. As to quaternary structure, interacts with GTP-bound RAC1. Interacts with CDC42. Interacts with RHOA. Interacts with CCPG1, which results in specific inhibition of its exchange activity toward RHOA, but does not affect its activity on CDC42. Mainly phosphorylated on serine. Highest expression in the brain, where it is found in neurons and alpha-tanycytes (at protein level). Detected in brain, and at lower levels in the heart.

The protein resides in the cytoplasm. It is found in the cell membrane. Functionally, guanine nucleotide exchange factor that catalyzes guanine nucleotide exchange on RHOA and CDC42, and thereby contributes to the regulation of RHOA and CDC42 signaling pathways. Seems to lack activity with RAC1. Becomes activated and highly tumorigenic by truncation of the N-terminus. The sequence is that of Guanine nucleotide exchange factor DBS (Mcf2l) from Rattus norvegicus (Rat).